The following is a 192-amino-acid chain: dTTP/UTP pyrophosphatase (192 aa).

The active-site Proton acceptor is D71.

This sequence belongs to the Maf family. YhdE subfamily. Requires a divalent metal cation as cofactor.

It localises to the cytoplasm. The catalysed reaction is dTTP + H2O = dTMP + diphosphate + H(+). It carries out the reaction UTP + H2O = UMP + diphosphate + H(+). Its function is as follows. Nucleoside triphosphate pyrophosphatase that hydrolyzes dTTP and UTP. May have a dual role in cell division arrest and in preventing the incorporation of modified nucleotides into cellular nucleic acids. This Clostridium kluyveri (strain NBRC 12016) protein is dTTP/UTP pyrophosphatase.